Consider the following 518-residue polypeptide: Probable cytochrome P450 9h1 (518 aa).

Cys462 is a binding site for heme.

The protein belongs to the cytochrome P450 family. The cofactor is heme.

It localises to the endoplasmic reticulum membrane. It is found in the microsome membrane. Its function is as follows. May be involved in the metabolism of insect hormones and in the breakdown of synthetic insecticides. In Drosophila melanogaster (Fruit fly), this protein is Probable cytochrome P450 9h1 (Cyp9h1).